Consider the following 175-residue polypeptide: Bifunctional protein PyrR (175 aa).

Substrate contacts are provided by residues 40–41, Arg85, 102–110, Arg135, and Val159; these read TR and DDVLYTGRT. The PRPP-binding motif lies at 98–110; it reads VIIIDDVLYTGRT.

The protein belongs to the purine/pyrimidine phosphoribosyltransferase family. PyrR subfamily. Homodimer and homohexamer; in equilibrium.

It catalyses the reaction UMP + diphosphate = 5-phospho-alpha-D-ribose 1-diphosphate + uracil. Its function is as follows. Regulates transcriptional attenuation of the pyrimidine nucleotide (pyr) operon by binding in a uridine-dependent manner to specific sites on pyr mRNA. This disrupts an antiterminator hairpin in the RNA and favors formation of a downstream transcription terminator, leading to a reduced expression of downstream genes. In terms of biological role, also displays a weak uracil phosphoribosyltransferase activity which is not physiologically significant. The protein is Bifunctional protein PyrR of Staphylococcus saprophyticus subsp. saprophyticus (strain ATCC 15305 / DSM 20229 / NCIMB 8711 / NCTC 7292 / S-41).